The sequence spans 360 residues: MDSSNCKVNAPLLSQRHRRMVTKDGHSTLQMDGAQRGLVYLRDAWGILMDMRWRWMMLVFSASFVVHWLVFAVLWYAVAEMNGDLEIDHDVPPENHTICVKHITSFTAAFSFSLETQLTIGYGTMFPSGDCPSAIALLAIQMLLGLMLEAFITGAFVAKIARPKNRAFSIRFTDLAVVAHKDGKPNLIFQVANTRPSPLTNVRVSAVLYQERENGELYQTSVDFHLDGISSEECPFFIFPLTYYHTISPSSPLATLLQHETPPHFELVVFLSAMQEGTGEICQRRTSYLPSEIMLHHRFAALMTRGSKGEYQVKMENFDKTVPEHPTPVVSKSPHRTDLDIHINGQSIDNFQIAETGLTE.

The Cytoplasmic portion of the chain corresponds to 1-50; that stretch reads MDSSNCKVNAPLLSQRHRRMVTKDGHSTLQMDGAQRGLVYLRDAWGILMD. A helical membrane pass occupies residues 51–77; it reads MRWRWMMLVFSASFVVHWLVFAVLWYA. Topologically, residues 78-105 are extracellular; it reads VAEMNGDLEIDHDVPPENHTICVKHITS. An intramembrane region (helical; Pore-forming) is located at residues 106-122; sequence FTAAFSFSLETQLTIGY. Residues 119–124 carry the Selectivity filter motif; the sequence is TIGYGT. Topologically, residues 123 to 131 are extracellular; that stretch reads GTMFPSGDC. A helical membrane pass occupies residues 132 to 157; the sequence is PSAIALLAIQMLLGLMLEAFITGAFV. Residues 158–360 lie on the Cytoplasmic side of the membrane; sequence AKIARPKNRA…FQIAETGLTE (203 aa). A Phosphoserine; by PKA modification is found at Ser287.

It belongs to the inward rectifier-type potassium channel (TC 1.A.2.1) family. KCNJ13 subfamily. In terms of assembly, homotetramer. Interacts with RAB28; the interaction may facilitate cone outer segments phagocytosis. In terms of processing, phosphorylation at Ser-287 by PKA increases ionic currents. As to expression, expressed in retina.

The protein resides in the membrane. It localises to the cell membrane. It catalyses the reaction K(+)(in) = K(+)(out). With respect to regulation, inhibited by Ba(2+) and Cs(+), although sensitivity to those inhibitors is much lower than in other Kir channels. Its function is as follows. Inward rectifier potassium channels are characterized by a greater tendency to allow potassium to flow into the cell rather than out of it. Their voltage dependence is regulated by the concentration of extracellular potassium; as external potassium is raised, the voltage range of the channel opening shifts to more positive voltages. The inward rectification is mainly due to the blockage of outward current by internal magnesium. KCNJ13 has a very low single channel conductance, low sensitivity to block by external barium and cesium, and no dependence of its inward rectification properties on the internal blocking particle magnesium. This chain is Inward rectifier potassium channel 13, found in Mus musculus (Mouse).